The following is a 1427-amino-acid chain: Double-stranded DNA deaminase toxin A (1427 aa).

Helical transmembrane passes span 16 to 36 and 43 to 63; these read ALAG…AVAF and FGVA…LLSI. YD repeat units lie at residues 469–501, 548–584, 720–747, and 977–1008; these read RVVE…DGRT, YDDA…GPDG, NARG…GRLR, and YDGA…ISRA. The tract at residues 1264–1427 is C-terminal effector domain, has cytidine deaminase activity; that stretch reads IGLNGGANVY…SPKSPTKGGC (164 aa). Zn(2+)-binding residues include His-1345, Cys-1373, and Cys-1376. Residues 1402–1427 are disordered; sequence KRGATGETKVFTGNSNSPKSPTKGGC. Polar residues predominate over residues 1412–1421; the sequence is FTGNSNSPKS.

Belongs to the RHS/WapA nuclease family. As to quaternary structure, the toxic domain forms a 1:1 complex with the DddI immunity protein.

Its subcellular location is the membrane. It carries out the reaction a 2'-deoxycytidine in double-stranded DNA + H2O + H(+) = a 2'-deoxyuridine in double-stranded DNA + NH4(+). Its function is as follows. Toxic component of a toxin-immunity protein module, which functions as a cellular contact-dependent growth inhibition (CDI) system. CDI modules allow bacteria to communicate with and inhibit the growth of closely related neighboring bacteria in a contact-dependent fashion. Bacteria that have this module inhibit or kill bacteria without it, giving them a growth advantage. Probably specifically inhibited by cognate immunity protein DddI. The C-terminal 163 residue fragment has double-stranded DNA cytidine deaminase activity; it does not deaminate ssDNA, ssRNA or dsRNA. Leads to C:G to T:A conversions in deaminated DNA. Preferentially deaminates 5'-TC-3' substrates. In Burkholderia cenocepacia (strain H111), this protein is Double-stranded DNA deaminase toxin A.